A 58-amino-acid chain; its full sequence is ATP synthase F(0) complex subunit k, mitochondrial (58 aa).

Residues K16 and K17 each carry the N6-acetyllysine modification. Residues 23 to 45 (TLTGRMNCVLATYGGIALLVLYF) traverse the membrane as a helical segment.

As to quaternary structure, component of the ATP synthase complex composed at least of ATP5F1A/subunit alpha, ATP5F1B/subunit beta, ATP5MC1/subunit c (homooctomer), MT-ATP6/subunit a, MT-ATP8/subunit 8, ATP5ME/subunit e, ATP5MF/subunit f, ATP5MG/subunit g, ATP5MK/subunit k, ATP5MJ/subunit j, ATP5F1C/subunit gamma, ATP5F1D/subunit delta, ATP5F1E/subunit epsilon, ATP5PF/subunit F6, ATP5PB/subunit b, ATP5PD/subunit d, ATP5PO/subunit OSCP. ATP synthase complex consists of a soluble F(1) head domain (subunits alpha(3) and beta(3)) - the catalytic core - and a membrane F(0) domain - the membrane proton channel (subunits c, a, 8, e, f, g, k and j). These two domains are linked by a central stalk (subunits gamma, delta, and epsilon) rotating inside the F1 region and a stationary peripheral stalk (subunits F6, b, d, and OSCP). The ATP synthase complex/complex V exists as a monomeric and a dimeric supercomplex that helps shape mitochondrial cristae to optimize proton flow.

The protein localises to the mitochondrion membrane. Subunit k, of the mitochondrial membrane ATP synthase complex (F(1)F(0) ATP synthase or Complex V) that produces ATP from ADP in the presence of a proton gradient across the membrane which is generated by electron transport complexes of the respiratory chain. ATP synthase complex consist of a soluble F(1) head domain - the catalytic core - and a membrane F(1) domain - the membrane proton channel. These two domains are linked by a central stalk rotating inside the F(1) region and a stationary peripheral stalk. During catalysis, ATP synthesis in the catalytic domain of F(1) is coupled via a rotary mechanism of the central stalk subunits to proton translocation. In vivo, can only synthesize ATP although its ATP hydrolase activity can be activated artificially in vitro. Part of the complex F(0) domain. Required for dimerization of the ATP synthase complex and as such regulates ATP synthesis in the mitochondria. The polypeptide is ATP synthase F(0) complex subunit k, mitochondrial (Mus musculus (Mouse)).